Here is a 499-residue protein sequence, read N- to C-terminus: Glycerol kinase (499 aa).

T13 provides a ligand contact to ADP. ATP-binding residues include T13, T14, and S15. Position 13 (T13) interacts with sn-glycerol 3-phosphate. R17 serves as a coordination point for ADP. Sn-glycerol 3-phosphate-binding residues include R83, E84, Y135, and D245. Positions 83, 84, 135, 245, and 246 each coordinate glycerol. Residues T267 and G310 each coordinate ADP. ATP-binding residues include T267, G310, Q314, and G411. ADP is bound by residues G411 and N415.

Belongs to the FGGY kinase family.

It catalyses the reaction glycerol + ATP = sn-glycerol 3-phosphate + ADP + H(+). It functions in the pathway polyol metabolism; glycerol degradation via glycerol kinase pathway; sn-glycerol 3-phosphate from glycerol: step 1/1. Its activity is regulated as follows. Inhibited by fructose 1,6-bisphosphate (FBP). Functionally, key enzyme in the regulation of glycerol uptake and metabolism. Catalyzes the phosphorylation of glycerol to yield sn-glycerol 3-phosphate. This chain is Glycerol kinase, found in Xanthomonas euvesicatoria pv. vesicatoria (strain 85-10) (Xanthomonas campestris pv. vesicatoria).